The primary structure comprises 638 residues: MTHTFAENYDVIVIGAGHAGVEAGLAASRMGCKTLLATINLDMVAFMPCNPSIGGSAKGIVVREIDALGGEMGRNIDKTYIQMKMLNMGKGPAVRALRAQADKAEYASEMKRTVERQENLTLRQTMIDEILVEDGKVIGVRTATNQKFSAKAVVVTTGTALRGEIIIGDLKYSSGPNNSLASITLADNLKELGLEIGRFKTGTPPRVNARTINYEDTEIQPGDEKPNHFSFLSKDEDYLLDQIPCWLTYTNATSHEIINSNLHRAPMFSGIVKGIGPRYCPSIEDKIVRFADKERHQLFLEPEGRNTDEIYVQGLSTSLPEDVQQDLIHSIKGLENAQMMRTGYAIEYDMVMPHQLRATLETKKISGLFTAGQTNGTSGYEEAAGQGIVAGINAALKVQGKPELILKRSDGYIGVMIDDLVTKGTVEPYRLLTSRAEYRLILRHDNADMRLTEIGRQVGLVDDERWQVFQIHKNQFDNEMKRLESIKLKPIKETNEKVVAMGFKPLTDALTAKEFMRRPDVTYADAVAFIGPAAEDLDAKTIELIETEVKYEGYIAKALDQVEKMKRMEEKRIPADIDWDDIDSIATEARQKFKLISPETIGQASRISGVNPADISILMVYLEGRSRSISKNKSKDSH.

Residues 15 to 20, Ile-127, and Ser-182 contribute to the FAD site; that span reads GAGHAG. 276–290 is a binding site for NAD(+); it reads GPRYCPSIEDKIVRF. FAD is bound at residue Gln-373.

This sequence belongs to the MnmG family. In terms of assembly, homodimer. Heterotetramer of two MnmE and two MnmG subunits. FAD serves as cofactor.

Its subcellular location is the cytoplasm. In terms of biological role, NAD-binding protein involved in the addition of a carboxymethylaminomethyl (cmnm) group at the wobble position (U34) of certain tRNAs, forming tRNA-cmnm(5)s(2)U34. The chain is tRNA uridine 5-carboxymethylaminomethyl modification enzyme MnmG from Streptococcus suis (strain 98HAH33).